We begin with the raw amino-acid sequence, 154 residues long: Fluoride-specific ion channel FluC 1 (154 aa).

A run of 4 helical transmembrane segments spans residues 28 to 48 (VVAV…AASL), 59 to 79 (WTTF…MVVI), 91 to 111 (PFFG…AVDS), and 124 to 144 (LAYL…AAWA). Na(+) contacts are provided by G99 and T102.

Belongs to the fluoride channel Fluc/FEX (TC 1.A.43) family.

The protein resides in the cell membrane. The enzyme catalyses fluoride(in) = fluoride(out). Na(+) is not transported, but it plays an essential structural role and its presence is essential for fluoride channel function. Functionally, fluoride-specific ion channel. Important for reducing fluoride concentration in the cell, thus reducing its toxicity. The polypeptide is Fluoride-specific ion channel FluC 1 (Streptomyces coelicolor (strain ATCC BAA-471 / A3(2) / M145)).